The following is a 148-amino-acid chain: SsrA-binding protein (148 aa).

Over residues 129 to 142 (ETEKKRDWEREKAR) the composition is skewed to basic and acidic residues. The disordered stretch occupies residues 129–148 (ETEKKRDWEREKARIMRAGT).

Belongs to the SmpB family.

The protein localises to the cytoplasm. Its function is as follows. Required for rescue of stalled ribosomes mediated by trans-translation. Binds to transfer-messenger RNA (tmRNA), required for stable association of tmRNA with ribosomes. tmRNA and SmpB together mimic tRNA shape, replacing the anticodon stem-loop with SmpB. tmRNA is encoded by the ssrA gene; the 2 termini fold to resemble tRNA(Ala) and it encodes a 'tag peptide', a short internal open reading frame. During trans-translation Ala-aminoacylated tmRNA acts like a tRNA, entering the A-site of stalled ribosomes, displacing the stalled mRNA. The ribosome then switches to translate the ORF on the tmRNA; the nascent peptide is terminated with the 'tag peptide' encoded by the tmRNA and targeted for degradation. The ribosome is freed to recommence translation, which seems to be the essential function of trans-translation. In Burkholderia lata (strain ATCC 17760 / DSM 23089 / LMG 22485 / NCIMB 9086 / R18194 / 383), this protein is SsrA-binding protein.